The primary structure comprises 394 residues: Lipase 3 (394 aa).

The signal sequence occupies residues 1–20 (MTRGALKVTILLVGLGLVLA). The N-linked (GlcNAc...) asparagine glycan is linked to asparagine 131. Catalysis depends on charge relay system residues serine 164 and histidine 369.

This sequence belongs to the AB hydrolase superfamily. Lipase family. Fat body.

The chain is Lipase 3 (Lip3) from Drosophila melanogaster (Fruit fly).